The sequence spans 1416 residues: K homology domain-containing protein 4 (1416 aa).

Disordered stretches follow at residues 25 to 76 (NPNG…TSMR), 108 to 174 (KAEA…TRSS), 196 to 225 (VNSS…LSQS), 255 to 320 (QNDE…FPGR), and 341 to 385 (SSLN…MPKP). Low complexity-rich tracts occupy residues 196–213 (VNSS…SANH), 273–285 (QSSF…LDQL), and 341–350 (SSLNPPASGS). Positions 357-369 (GLSSAQPLRSPQP) are enriched in polar residues. 5 KH domains span residues 412–504 (FKST…VILD), 508–594 (GLRS…QVSM), 747–816 (FEVR…EELP), 817–892 (AEMS…SVME), and 900–968 (DYIS…DHVP). Disordered stretches follow at residues 1215-1240 (AGVS…SGHR) and 1289-1416 (HASG…FDRA). Positions 1219–1239 (VPTSGGIQFPSQPSLHQQSGH) are enriched in polar residues. Residues 1343–1374 (QQQAQQQLQYQQQQQQQQQQQQQPGYGMPHQP) show a composition bias toward low complexity. The span at 1391 to 1402 (RNTQNPDSTTMD) shows a compositional bias: polar residues.

In terms of biological role, RNA-binding protein that recognizes the sequence AUACCC via its tandem KH domains 3 and 4, probably in order to promote mRNA instability. Plays an essential role in filamentous growth and virulence. The protein is K homology domain-containing protein 4 of Mycosarcoma maydis (Corn smut fungus).